An 86-amino-acid chain; its full sequence is Putative membrane protein insertion efficiency factor (86 aa).

This sequence belongs to the UPF0161 family.

It localises to the cell inner membrane. Its function is as follows. Could be involved in insertion of integral membrane proteins into the membrane. The protein is Putative membrane protein insertion efficiency factor of Pasteurella multocida (strain Pm70).